We begin with the raw amino-acid sequence, 365 residues long: Paraneoplastic antigen Ma2 homolog (365 aa).

N-acetylalanine is present on Ala-2. The tract at residues 336 to 365 (EEEDAYFEQESREEPGEREGSGCWNNSRNN) is disordered. Residues 344-355 (QESREEPGEREG) are compositionally biased toward basic and acidic residues.

Belongs to the PNMA family. In terms of tissue distribution, expressed in the cerebrum, cerebellum and testis.

The protein resides in the nucleus. It localises to the nucleolus. The polypeptide is Paraneoplastic antigen Ma2 homolog (Pnma2) (Mus musculus (Mouse)).